Here is a 940-residue protein sequence, read N- to C-terminus: MIEWTLKKLIGTKNERELKKAHAKVARVNELETRMRALKDEDFVSETNRMRQEIQNGRSLDDLLFEAFAITREAARRVIGQRHYDVQLIGGMFLHEGCIAEMRTGEGKTLTATLPTYLNALSGRGVHVVTVNDYLARRDAEWMGRVYRFLGMTTGCVLHELNDKQRQEAYRSDITYGQNNEFGFDYLRDNMKFRLQDYVQRELNFAIVDEVDSILIDEARTPLIISGPTEDSTDKYYRVDQVIPGLVPDQDYTLDEKHRSVSLTDDGIEKLQKRLGVGNLYDPGEIEMLHHVDQALRAHTLYKRDKDYVVKDGEVVIVDEFTGRQMPGRRWSDGLHQAIEAKEGVKIENENQTLATVSFQNYFRMYSKLAGMTGTADTEAEEFAKIYNLDVRVIPTNRPPIRKDLQDVVYKTEREKFEAVAAEIEELHKNGQPVLVGTVSIAKSEVVASFLKKRGIPHNVLNAKQHQREADIVAQAGRKGAVTISTNMAGRGTDILLGGNAEVLAKASMGPPPEPPTSAPDGQPLDLTAYEAEVAAWEQKFADTKAKLEEQTKKEREEVHTAGGLFIIGTERHESRRVDNQLRGRAGRQGDPGGSRFFLSLEDDLMRIFGSERIQGLMERLGMEEGEVIEHVWLSRAIEGAQKRVEGHNFDIRKNLLEYDDVMNQQRRTIYKLRRQVLAAGAGVPLVEYDEDPKTRIKTRSERTVSWADFRELILDSMEDVIVSLTDTYAPTRGVEGWDIAALQQGVKETFNLEMNFEGVGNREELQEHIYKAAEKVFQARDEEFGENFMRFLQYNYLATIDRLWKDHLLAMDHLRQGIGLRGYGQKDPKQEYKKEGYQGFIQMLSAIKAQFVTQLMHVQPRSASSAAEEAARIQRQLAQQQKKAVEGRATADGKLDEGSVAAAARPAAASRPAVGRNDPCPCGSGRKYKKCHGASEASV.

ATP contacts are provided by residues Gln-87, 105-109, and Asp-494; that span reads GEGKT. Residues 879-940 are disordered; that stretch reads AQQQKKAVEG…KCHGASEASV (62 aa). Over residues 884 to 898 the composition is skewed to basic and acidic residues; that stretch reads KAVEGRATADGKLDE. A compositionally biased stretch (low complexity) spans 900–915; it reads SVAAAARPAAASRPAV. Zn(2+) contacts are provided by Cys-921, Cys-923, Cys-932, and His-933.

It belongs to the SecA family. In terms of assembly, monomer and homodimer. Part of the essential Sec protein translocation apparatus which comprises SecA, SecYEG and auxiliary proteins SecDF-YajC and YidC. It depends on Zn(2+) as a cofactor.

Its subcellular location is the cell inner membrane. The protein localises to the cytoplasm. It carries out the reaction ATP + H2O + cellular proteinSide 1 = ADP + phosphate + cellular proteinSide 2.. In terms of biological role, part of the Sec protein translocase complex. Interacts with the SecYEG preprotein conducting channel. Has a central role in coupling the hydrolysis of ATP to the transfer of proteins into and across the cell membrane, serving as an ATP-driven molecular motor driving the stepwise translocation of polypeptide chains across the membrane. The protein is Protein translocase subunit SecA of Myxococcus xanthus (strain DK1622).